We begin with the raw amino-acid sequence, 266 residues long: Thymidylate synthase (266 aa).

DUMP is bound at residue Arg-24. A (6R)-5,10-methylene-5,6,7,8-tetrahydrofolate-binding site is contributed by His-54. DUMP is bound at residue 129 to 130 (RR). Cys-149 acts as the Nucleophile in catalysis. DUMP is bound by residues 169–172 (RSAD), Asn-180, and 210–212 (HIY). Position 172 (Asp-172) interacts with (6R)-5,10-methylene-5,6,7,8-tetrahydrofolate. Position 265 (Ala-265) interacts with (6R)-5,10-methylene-5,6,7,8-tetrahydrofolate.

Belongs to the thymidylate synthase family. Bacterial-type ThyA subfamily. As to quaternary structure, homodimer.

The protein localises to the cytoplasm. It carries out the reaction dUMP + (6R)-5,10-methylene-5,6,7,8-tetrahydrofolate = 7,8-dihydrofolate + dTMP. The protein operates within pyrimidine metabolism; dTTP biosynthesis. In terms of biological role, catalyzes the reductive methylation of 2'-deoxyuridine-5'-monophosphate (dUMP) to 2'-deoxythymidine-5'-monophosphate (dTMP) while utilizing 5,10-methylenetetrahydrofolate (mTHF) as the methyl donor and reductant in the reaction, yielding dihydrofolate (DHF) as a by-product. This enzymatic reaction provides an intracellular de novo source of dTMP, an essential precursor for DNA biosynthesis. In Mycobacterium avium (strain 104), this protein is Thymidylate synthase.